A 163-amino-acid chain; its full sequence is Ribosome maturation factor RimP (163 aa).

It belongs to the RimP family.

It localises to the cytoplasm. Functionally, required for maturation of 30S ribosomal subunits. The polypeptide is Ribosome maturation factor RimP (Polynucleobacter asymbioticus (strain DSM 18221 / CIP 109841 / QLW-P1DMWA-1) (Polynucleobacter necessarius subsp. asymbioticus)).